The following is a 357-amino-acid chain: F-box only protein 25 (357 aa).

Positions 1 to 83 (MPFLGQDWRS…NDTNTQCFYR (83 aa)) are interaction with beta-actin. Positions 225-273 (LTLSDLPVHMLSNILYRFSDGWDIVTLGQVTPTLSALSEDRQLWKKLCQ) constitute an F-box domain.

As to quaternary structure, part of a SCF (SKP1-cullin-F-box) protein ligase complex consisting of FBXO25, SKP1, CUL1 and RBX1. Interacts directly with SKP1 and CUL1. Interacts (via C-terminus) with beta-actin (via N-terminus).

It localises to the nucleus. The protein operates within protein modification; protein ubiquitination. Its function is as follows. Substrate-recognition component of the SCF (SKP1-CUL1-F-box protein)-type E3 ubiquitin ligase complex. May play a role in accumulation of expanded polyglutamine (polyQ) protein huntingtin (HTT). The chain is F-box only protein 25 (FBXO25) from Bos taurus (Bovine).